Consider the following 551-residue polypeptide: Chaperonin GroEL (551 aa).

Residues 30–33 (TLGP), Lys-51, 87–91 (DGTTT), Gly-415, and Asp-496 contribute to the ATP site.

It belongs to the chaperonin (HSP60) family. As to quaternary structure, forms a cylinder of 14 subunits composed of two heptameric rings stacked back-to-back. Interacts with the co-chaperonin GroES.

The protein resides in the cytoplasm. It catalyses the reaction ATP + H2O + a folded polypeptide = ADP + phosphate + an unfolded polypeptide.. Together with its co-chaperonin GroES, plays an essential role in assisting protein folding. The GroEL-GroES system forms a nano-cage that allows encapsulation of the non-native substrate proteins and provides a physical environment optimized to promote and accelerate protein folding. This Maricaulis maris (strain MCS10) (Caulobacter maris) protein is Chaperonin GroEL.